A 51-amino-acid chain; its full sequence is Large ribosomal subunit protein bL33 (51 aa).

Residues 1-23 form a disordered region; sequence MRDKIKLESSAGTGHFYTTTKNK. Residues 10–20 are compositionally biased toward polar residues; that stretch reads SAGTGHFYTTT.

It belongs to the bacterial ribosomal protein bL33 family.

The chain is Large ribosomal subunit protein bL33 from Chromobacterium violaceum (strain ATCC 12472 / DSM 30191 / JCM 1249 / CCUG 213 / NBRC 12614 / NCIMB 9131 / NCTC 9757 / MK).